The chain runs to 180 residues: NADH-quinone oxidoreductase subunit I (180 aa).

2 4Fe-4S ferredoxin-type domains span residues 44 to 74 (LNRY…VEGA) and 90 to 119 (RVYQ…MTTE). 8 residues coordinate [4Fe-4S] cluster: cysteine 54, cysteine 57, cysteine 60, cysteine 64, cysteine 99, cysteine 102, cysteine 105, and cysteine 109. Positions 145 to 180 (MQAPPHDMAPGKTDDDYYLGNVTPITPVPSGTEDAR) are disordered.

Belongs to the complex I 23 kDa subunit family. As to quaternary structure, NDH-1 is composed of 14 different subunits. Subunits NuoA, H, J, K, L, M, N constitute the membrane sector of the complex. It depends on [4Fe-4S] cluster as a cofactor.

The protein localises to the cell membrane. It carries out the reaction a quinone + NADH + 5 H(+)(in) = a quinol + NAD(+) + 4 H(+)(out). NDH-1 shuttles electrons from NADH, via FMN and iron-sulfur (Fe-S) centers, to quinones in the respiratory chain. The immediate electron acceptor for the enzyme in this species is believed to be menaquinone. Couples the redox reaction to proton translocation (for every two electrons transferred, four hydrogen ions are translocated across the cytoplasmic membrane), and thus conserves the redox energy in a proton gradient. In Mycolicibacterium smegmatis (strain ATCC 700084 / mc(2)155) (Mycobacterium smegmatis), this protein is NADH-quinone oxidoreductase subunit I.